Reading from the N-terminus, the 81-residue chain is NAD(P)H-quinone oxidoreductase subunit L (81 aa).

The next 2 helical transmembrane spans lie at leucine 13–phenylalanine 33 and leucine 51–leucine 71.

This sequence belongs to the complex I NdhL subunit family. As to quaternary structure, NDH-1 can be composed of about 15 different subunits; different subcomplexes with different compositions have been identified which probably have different functions.

It localises to the cellular thylakoid membrane. It carries out the reaction a plastoquinone + NADH + (n+1) H(+)(in) = a plastoquinol + NAD(+) + n H(+)(out). The enzyme catalyses a plastoquinone + NADPH + (n+1) H(+)(in) = a plastoquinol + NADP(+) + n H(+)(out). Functionally, NDH-1 shuttles electrons from an unknown electron donor, via FMN and iron-sulfur (Fe-S) centers, to quinones in the respiratory and/or the photosynthetic chain. The immediate electron acceptor for the enzyme in this species is believed to be plastoquinone. Couples the redox reaction to proton translocation, and thus conserves the redox energy in a proton gradient. Cyanobacterial NDH-1 also plays a role in inorganic carbon-concentration. In Synechococcus sp. (strain WH7803), this protein is NAD(P)H-quinone oxidoreductase subunit L.